A 122-amino-acid chain; its full sequence is Basic phospholipase A2 Ts-G6D49 (122 aa).

7 cysteine pairs are disulfide-bonded: Cys-26/Cys-115, Cys-28/Cys-44, Cys-43/Cys-95, Cys-49/Cys-122, Cys-50/Cys-88, Cys-57/Cys-81, and Cys-75/Cys-86. Ca(2+) is bound by residues Tyr-27, Gly-29, and Gly-31. Residue His-47 is part of the active site. Residue Asp-48 coordinates Ca(2+). Asp-89 is an active-site residue.

It depends on Ca(2+) as a cofactor. As to expression, expressed by the venom gland.

Its subcellular location is the secreted. The enzyme catalyses a 1,2-diacyl-sn-glycero-3-phosphocholine + H2O = a 1-acyl-sn-glycero-3-phosphocholine + a fatty acid + H(+). Its function is as follows. Snake venom phospholipase A2 that induces fast and sustaining local edema a few hours after injection (5-10 ug) in the hind paw, and prolongs the coagulation time of human plasma. Exhibits moderate hydrolytic activities and prefers the zwitterionic micelles (dPPC with Triton X-100) to the anionic micelles (dPPC with deoxycholate). PLA2 catalyzes the calcium-dependent hydrolysis of the 2-acyl groups in 3-sn-phosphoglycerides. This Trimeresurus stejnegeri (Chinese green tree viper) protein is Basic phospholipase A2 Ts-G6D49.